The following is a 186-amino-acid chain: Acireductone dioxygenase (186 aa).

Residues His-103, His-105, Glu-109, and His-147 each contribute to the Fe(2+) site. Ni(2+)-binding residues include His-103, His-105, Glu-109, and His-147.

Belongs to the acireductone dioxygenase (ARD) family. As to quaternary structure, monomer. The cofactor is Fe(2+). Ni(2+) is required as a cofactor.

It catalyses the reaction 1,2-dihydroxy-5-(methylsulfanyl)pent-1-en-3-one + O2 = 3-(methylsulfanyl)propanoate + CO + formate + 2 H(+). The catalysed reaction is 1,2-dihydroxy-5-(methylsulfanyl)pent-1-en-3-one + O2 = 4-methylsulfanyl-2-oxobutanoate + formate + 2 H(+). It functions in the pathway amino-acid biosynthesis; L-methionine biosynthesis via salvage pathway; L-methionine from S-methyl-5-thio-alpha-D-ribose 1-phosphate: step 5/6. Functionally, catalyzes 2 different reactions between oxygen and the acireductone 1,2-dihydroxy-3-keto-5-methylthiopentene (DHK-MTPene) depending upon the metal bound in the active site. Fe-containing acireductone dioxygenase (Fe-ARD) produces formate and 2-keto-4-methylthiobutyrate (KMTB), the alpha-ketoacid precursor of methionine in the methionine recycle pathway. Ni-containing acireductone dioxygenase (Ni-ARD) produces methylthiopropionate, carbon monoxide and formate, and does not lie on the methionine recycle pathway. The chain is Acireductone dioxygenase from Synechococcus sp. (strain CC9605).